We begin with the raw amino-acid sequence, 332 residues long: MKLGRAVLGLLLLAPSVVQAVEPISLGLALAGVLTGYIYPRLYCLFAECCGQKRSLSREALQKDLDDNLFGQHLAKKIILNAVFGFINNPKPKKPLTLSLHGWTGTGKNFVSKIIAENIYEGGLNSDYVHLFVATLHFPHASNITLYKDQLQLWIRGNVSACARSIFIFDEMDKMHAGLIDAIKPFLDYYDLVDGVSYQKAMFIFLSNAGAERITDVALDFWRSGKQREDIKLKDIEHALSVSVFNNKNSGFWHSSLIDRNLIDYFVPFLPLEYKHLKMCIRVEMQSRGYEIDEDIVSRVAEEMTFFPKEERVFSDKGCKTVFTKLDYYYDD.

An N-terminal signal peptide occupies residues 1-20 (MKLGRAVLGLLLLAPSVVQA). An interaction with SNAPIN region spans residues 91-251 (KPKKPLTLSL…VSVFNNKNSG (161 aa)). 102–109 (GWTGTGKN) contributes to the ATP binding site. Residues Asn143 and Asn158 are each glycosylated (N-linked (GlcNAc...) (high mannose) asparagine). An interaction with KLC1 region spans residues 251-332 (GFWHSSLIDR…FTKLDYYYDD (82 aa)). An interaction with SYNE3 region spans residues 312–332 (RVFSDKGCKTVFTKLDYYYDD).

The protein belongs to the ClpA/ClpB family. Torsin subfamily. As to quaternary structure, homohexamer. Interacts with TOR1B; the interaction may be specific of neural tissues. Interacts (ATP-bound) with TOR1AIP1 and TOR1AIP2; the interactions induce ATPase activity. Interacts with KLHL14; preferentially when ATP-free. Interacts with KLC1 (via TPR repeats); the interaction associates TOR1A with the kinesin oligomeric complex. Interacts with COPS4; the interaction associates TOR1A with the CSN complex. Interacts with SNAPIN; the interaction is direct and associates SNAPIN with the CSN complex. Interacts with STON2. Interacts (ATP-bound) with SYNE3 (via KASH domain); the interaction is required for SYNE3 nuclear envelope localization. Interacts with VIM; the interaction associates TOR1A with the cytoskeleton. Interacts with PLEC. Interacts (ATP-bound) with SLC6A3; regulates SLC6A3 transport to the plasma membrane. In terms of processing, N-glycosylated. Widely expressed. Highest levels in kidney and liver. In the brain, high levels found in the dopaminergic neurons of the substantia nigra pars compacta, as well as in the neocortex, hippocampus and cerebellum. Also highly expressed in the spinal cord.

The protein resides in the endoplasmic reticulum lumen. The protein localises to the nucleus membrane. It localises to the cell projection. It is found in the growth cone. Its subcellular location is the cytoplasmic vesicle membrane. The protein resides in the cytoplasmic vesicle. The protein localises to the secretory vesicle. It localises to the synaptic vesicle. It is found in the cytoplasm. Its subcellular location is the cytoskeleton. It catalyses the reaction ATP + H2O = ADP + phosphate + H(+). Functionally, protein with chaperone functions important for the control of protein folding, processing, stability and localization as well as for the reduction of misfolded protein aggregates. Involved in the regulation of synaptic vesicle recycling, controls STON2 protein stability in collaboration with the COP9 signalosome complex (CSN). In the nucleus, may link the cytoskeleton with the nuclear envelope, this mechanism seems to be crucial for the control of nuclear polarity, cell movement and, specifically in neurons, nuclear envelope integrity. Participates in the cellular trafficking and may regulate the subcellular location of multipass membrane proteins such as the dopamine transporter SLC6A3, leading to the modulation of dopamine neurotransmission. In the endoplasmic reticulum, plays a role in the quality control of protein folding by increasing clearance of misfolded proteins such as SGCE variants or holding them in an intermediate state for proper refolding. May have a redundant function with TOR1B in non-neural tissues. This Homo sapiens (Human) protein is Torsin-1A (TOR1A).